Here is an 874-residue protein sequence, read N- to C-terminus: Alanine--tRNA ligase (874 aa).

Residues histidine 563, histidine 567, cysteine 665, and histidine 669 each coordinate Zn(2+).

This sequence belongs to the class-II aminoacyl-tRNA synthetase family. It depends on Zn(2+) as a cofactor.

The protein resides in the cytoplasm. It catalyses the reaction tRNA(Ala) + L-alanine + ATP = L-alanyl-tRNA(Ala) + AMP + diphosphate. Catalyzes the attachment of alanine to tRNA(Ala) in a two-step reaction: alanine is first activated by ATP to form Ala-AMP and then transferred to the acceptor end of tRNA(Ala). Also edits incorrectly charged Ser-tRNA(Ala) and Gly-tRNA(Ala) via its editing domain. The protein is Alanine--tRNA ligase of Actinobacillus pleuropneumoniae serotype 7 (strain AP76).